The sequence spans 464 residues: Gamma-aminobutyric acid receptor subunit rho-3 (464 aa).

A signal peptide spans 1–15; the sequence is MVLAFWLAFFTYTWI. Residues 16 to 263 lie on the Extracellular side of the membrane; the sequence is TLMLDASAVK…LFINFVLRRH (248 aa). 4-aminobutanoate is bound at residue Arg-108. N-linked (GlcNAc...) asparagine glycosylation is present at Asn-123. Ser-172 serves as a coordination point for 4-aminobutanoate. Cys-181 and Cys-195 form a disulfide bridge. An N-linked (GlcNAc...) asparagine glycan is attached at Asn-194. Residue Glu-200 participates in 4-aminobutanoate binding. A helical membrane pass occupies residues 264–284; sequence IFFFVLQTYFPAMLMVMLSWV. Residues 285–296 are Cytoplasmic-facing; the sequence is SFWIDRRAVPAR. Residues 297–317 form a helical membrane-spanning segment; that stretch reads VSLGITTVLTMSTIVTGVSAS. Over 318-328 the chain is Extracellular; sequence MPQVSYVKAVD. A helical transmembrane segment spans residues 329 to 349; it reads VYMWVSSLFVFLSVIEYAAVN. The interaction with SQSTM1 stretch occupies residues 344 to 445; the sequence is EYAAVNYLTT…NNHVIDTYSR (102 aa). The Cytoplasmic segment spans residues 350–443; that stretch reads YLTTVEEWKQ…LENNHVIDTY (94 aa). The chain crosses the membrane as a helical span at residues 444 to 464; it reads SRIVFPVVYIIFNLFYWGIYV.

The protein belongs to the ligand-gated ion channel (TC 1.A.9) family. Gamma-aminobutyric acid receptor (TC 1.A.9.5) subfamily. GABRR3 sub-subfamily. As to quaternary structure, three rho subunits (rho-1/GBRR1, rho-2/GBRR2 and rho-3/GBRR3) coassemble either to form functional homopentamers or heteropentamers. Forms a ternary complex with SQSTM1 and PRKCZ. As to expression, expressed in retina.

It is found in the postsynaptic cell membrane. The protein resides in the cell membrane. It carries out the reaction chloride(in) = chloride(out). With respect to regulation, activated by agonists in the following the potency order: muscimol &gt; TACP &gt; TACA &gt; thiomuscimol &gt; CAMP &gt; CACA, when forming a homopentamer. Inhibited by TPMPA, a rho-specific antagonist, when forming a homopentamer. Inhibited antagonists in the following the potency order: TAMP = TPMPA &gt; P4MPA = THIP &gt; 14AA &gt; 3-APA, when forming a homopentamer. Rho subunit of the pentameric ligand-gated chloride channels responsible for mediating the effects of gamma-aminobutyric acid (GABA), the major inhibitory neurotransmitter in the brain. Rho-containing GABA-gated chloride channels are a subclass of GABA(A) receptors (GABAARs) entirely composed of rho subunits, where GABA molecules bind at the rho intersubunit interfaces. When activated by GABA, rho-GABAARs selectively allow the flow of chloride anions across the cell membrane down their electrochemical gradient. The polypeptide is Gamma-aminobutyric acid receptor subunit rho-3 (Rattus norvegicus (Rat)).